A 410-amino-acid polypeptide reads, in one-letter code: BRCA1-A complex subunit Abraxas 1 (410 aa).

The MPN domain maps to 7 to 160 (TAVLSGFVLG…HALYKPQKGL (154 aa)). Position 48 is a phosphoserine (serine 48). A coiled-coil region spans residues 208-261 (SLKEVQKINEMYTSLQDELKSICEKVEHSERAVEKLLNDVNRLKGEIKKRKQAQ). The tract at residues 354 to 410 (DGWQFKKSRLGGIQNRPSKTDTNSSNQEQASTVSSPETDEEIERMKGSGEYPQSPTF) is disordered. A compositionally biased stretch (polar residues) spans 368–389 (NRPSKTDTNSSNQEQASTVSSP). Phosphoserine occurs at positions 387 and 388. The residue at position 391 (threonine 391) is a Phosphothreonine. Serine 407 is modified (phosphoserine). The short motif at 407–410 (SPTF) is the pSXXF motif element.

This sequence belongs to the FAM175 family. Abraxas subfamily. Component of the ARISC complex, at least composed of UIMC1/RAP80, ABRAXAS1, BRCC3/BRCC36, BABAM2 and BABAM1/NBA1. Component of the BRCA1-A complex, at least composed of the BRCA1, BARD1, UIMC1/RAP80, ABRAXAS1, BRCC3/BRCC36, BABAM2 and BABAM1/NBA1. In the complex, interacts directly with UIMC1/RAP80, BRCC3/BRCC36 and BABAM2. Homodimer. Interacts directly (when phosphorylated at Ser-407) with BRCA1. The phosphorylated homodimer can interact directly with two BRCA1 chains, giving rise to a heterotetramer. Binds polyubiquitin. In terms of processing, phosphorylation of Ser-407 of the pSXXF motif by ATM or ATR constitutes a specific recognition motif for the BRCT domain of BRCA1.

The protein localises to the nucleus. Functionally, involved in DNA damage response and double-strand break (DSB) repair. Component of the BRCA1-A complex, acting as a central scaffold protein that assembles the various components of the complex and mediates the recruitment of BRCA1. The BRCA1-A complex specifically recognizes 'Lys-63'-linked ubiquitinated histones H2A and H2AX at DNA lesion sites, leading to target the BRCA1-BARD1 heterodimer to sites of DNA damage at DSBs. This complex also possesses deubiquitinase activity that specifically removes 'Lys-63'-linked ubiquitin on histones H2A and H2AX. The chain is BRCA1-A complex subunit Abraxas 1 from Bos taurus (Bovine).